Here is a 199-residue protein sequence, read N- to C-terminus: 3-isopropylmalate dehydratase small subunit (199 aa).

This sequence belongs to the LeuD family. LeuD type 1 subfamily. Heterodimer of LeuC and LeuD.

The catalysed reaction is (2R,3S)-3-isopropylmalate = (2S)-2-isopropylmalate. The protein operates within amino-acid biosynthesis; L-leucine biosynthesis; L-leucine from 3-methyl-2-oxobutanoate: step 2/4. In terms of biological role, catalyzes the isomerization between 2-isopropylmalate and 3-isopropylmalate, via the formation of 2-isopropylmaleate. The chain is 3-isopropylmalate dehydratase small subunit from Kocuria rhizophila (strain ATCC 9341 / DSM 348 / NBRC 103217 / DC2201).